Consider the following 588-residue polypeptide: Protein cereblon (588 aa).

Disordered stretches follow at residues 1–107 (MDDE…DDSD) and 159–197 (QERR…DIGF). Residues 41-50 (AWNNATQDEQ) are compositionally biased toward polar residues. Acidic residues predominate over residues 75-85 (MVEDVLQDDTA). A compositionally biased stretch (polar residues) spans 86-96 (SEGSHPSSDMS). Basic and acidic residues predominate over residues 159-168 (QERRRSRTSE). Over residues 181-192 (NDPPPQQPPRPP) the composition is skewed to pro residues. The Lon N-terminal domain maps to 228 to 454 (HMLIFLHQHI…LIKSTFKDES (227 aa)). Residues 453-562 (ESLFFCRYCN…LAGSSVRIGK (110 aa)) form the CULT domain. The Zn(2+) site is built by cysteine 458, cysteine 461, cysteine 527, and cysteine 530.

Belongs to the CRBN family. In terms of assembly, likely a component of a DCX (DDB1-CUL4-X-box) protein ligase complex. May interact with pic/DDB1. In terms of processing, ubiquitinated.

The protein localises to the nucleus. It functions in the pathway protein modification; protein ubiquitination. Functionally, substrate recognition component of a DCX (DDB1-CUL4-X-box) E3 protein ligase complex that mediates the ubiquitination and subsequent proteasomal degradation of target proteins. Has an essential role in mediating growth by negatively regulating insulin signaling. It also has a role in maintaining presynaptic function in the neuromuscular junction synapses of third-instar larvae. This Drosophila yakuba (Fruit fly) protein is Protein cereblon.